The primary structure comprises 192 residues: Protein A16 (192 aa).

The signal sequence occupies residues 1–22 (MLLANTAAAVLLLIVCIGASVG). One can recognise a C-type lectin domain in the interval 71-186 (KNKKFTIGTL…CLNPLNIFPY (116 aa)). Cys-163 and Cys-177 are oxidised to a cystine.

As to expression, expressed in the gut of adults.

The polypeptide is Protein A16 (CTL3) (Anopheles gambiae (African malaria mosquito)).